The sequence spans 295 residues: Cyclin-G1 (295 aa).

Belongs to the cyclin family. Cyclin G subfamily.

It localises to the nucleus. Functionally, may play a role in growth regulation. Is associated with G2/M phase arrest in response to DNA damage. May be an intermediate by which p53 mediates its role as an inhibitor of cellular proliferation. This is Cyclin-G1 (CCNG1) from Sus scrofa (Pig).